Here is a 447-residue protein sequence, read N- to C-terminus: Probable glycine dehydrogenase (decarboxylating) subunit 1 (447 aa).

The protein belongs to the GcvP family. N-terminal subunit subfamily. In terms of assembly, the glycine cleavage system is composed of four proteins: P, T, L and H. In this organism, the P 'protein' is a heterodimer of two subunits.

The catalysed reaction is N(6)-[(R)-lipoyl]-L-lysyl-[glycine-cleavage complex H protein] + glycine + H(+) = N(6)-[(R)-S(8)-aminomethyldihydrolipoyl]-L-lysyl-[glycine-cleavage complex H protein] + CO2. Its function is as follows. The glycine cleavage system catalyzes the degradation of glycine. The P protein binds the alpha-amino group of glycine through its pyridoxal phosphate cofactor; CO(2) is released and the remaining methylamine moiety is then transferred to the lipoamide cofactor of the H protein. The protein is Probable glycine dehydrogenase (decarboxylating) subunit 1 of Bacillus mycoides (strain KBAB4) (Bacillus weihenstephanensis).